A 1254-amino-acid polypeptide reads, in one-letter code: Structural polyprotein (1254 aa).

Positions 1–33 (MFPFQPMYPMQPMPYRNPFAAPRRPWFPRTDPF) are necessary for nucleocapsid assembly and virus assembly. A host transcription inhibition region spans residues 33-68 (FLAMQVQELTRSMANLTFKQRRDAPPEGPSAKKPKK). Positions 41 to 48 (LTRSMANL) match the Supraphysiological nuclear export signal motif. The segment at 45-119 (MANLTFKQRR…KKPGKRQRMV (75 aa)) is disordered. The Nuclear localization signal signature appears at 64-68 (KKPKK). The segment covering 80-92 (GKKKKNQGKKKAK) has biased composition (basic residues). Residues 91 to 127 (AKTGPPNPKAQNGNKKKTNKKPGKRQRMVMKLESDKT) are binding to the viral RNA. Phosphothreonine is present on residues threonine 93 and threonine 108. Residues 104 to 118 (NKKKTNKKPGKRQRM) are compositionally biased toward basic residues. Residues 112–126 (PGKRQRMVMKLESDK) form a ribosome-binding region. A Phosphoserine modification is found at serine 124. The region spanning 126–275 (KTFPIMLEGK…KYTPENCEQW (150 aa)) is the Peptidase S3 domain. Residue threonine 127 is modified to Phosphothreonine. Catalysis depends on charge relay system residues histidine 152, aspartate 174, and serine 226. The tract at residues 276-287 (SLVTTMCLLANV) is functions as an uncleaved signal peptide for the precursor of protein E3/E2. Topologically, residues 276-701 (SLVTTMCLLA…HYYHRYPMST (426 aa)) are extracellular. Residues asparagine 286, asparagine 546, and asparagine 652 are each glycosylated (N-linked (GlcNAc...) asparagine; by host). The chain crosses the membrane as a helical span at residues 702–722 (ILGLSICAAIATVSVAASTWL). Over 723 to 757 (FCRSRVACLTPYRLTPNARIPFCLAVLCCARTARA) the chain is Cytoplasmic. Residues cysteine 730, cysteine 750, and cysteine 751 are each lipidated (S-palmitoyl cysteine; by host). The tract at residues 730–750 (CLTPYRLTPNARIPFCLAVLC) is transient transmembrane before p62-6K protein processing. Topologically, residues 758–772 (ETTWESLDHLWNNNQ) are extracellular. The chain crosses the membrane as a helical span at residues 773–793 (QMFWIQLLIPLAALIVVTRLL). The Cytoplasmic segment spans residues 794 to 795 (RC). The helical transmembrane segment at 796–816 (VCCVVPFLVMAGAAAGAYEHA) threads the bilayer. Residues 817 to 1224 (TTMPSQAGIS…SKTAWTWLTS (408 aa)) lie on the Extracellular side of the membrane. 4 disulfide bridges follow: cysteine 861/cysteine 926, cysteine 874/cysteine 906, cysteine 875/cysteine 908, and cysteine 880/cysteine 890. Residues 896–913 (VYPFMWGGAYCFCDTENT) form an E1 fusion peptide loop region. An N-linked (GlcNAc...) asparagine; by host glycan is attached at asparagine 946. 4 disulfide bridges follow: cysteine 1071/cysteine 1083, cysteine 1113/cysteine 1188, cysteine 1118/cysteine 1192, and cysteine 1140/cysteine 1182. Residues 1225-1245 (LLGGSAVIIIIGLVLATIVAM) traverse the membrane as a helical segment. Residues 1246–1254 (YVLTNQKHN) lie on the Cytoplasmic side of the membrane.

Homodimer. Homomultimer. Interacts with host karyopherin KPNA4; this interaction allows the nuclear import of the viral capsid protein. Interacts with spike glycoprotein E2. Interacts with host IRAK1; the interaction leads to inhibition of IRAK1-dependent signaling. Part of a tetrameric complex composed of host CRM1, host importin alpha/beta dimer and the viral capsid; this complex blocks the receptor-mediated transport through the nuclear pore. Interacts with host phosphatase PPP1CA; this interaction dephosphorylates the capsid protein, which increases its ability to bind to the viral genome. As to quaternary structure, the precursor of protein E3/E2 and E1 form a heterodimer shortly after synthesis. In terms of assembly, interacts with spike glycoprotein E2. The precursor of protein E3/E2 and E1 form a heterodimer shortly after synthesis. Processing of the precursor of protein E3/E2 into E2 and E3 results in a heterodimer of the spike glycoproteins E2 and E1. Spike at virion surface are constituted of three E2-E1 heterodimers. After target cell attachment and endocytosis, E1 change conformation to form homotrimers. Interacts with 6K protein. Interacts with host LDLRAD3; this interaction mediates viral entry to the host cell. Interacts with spike glycoprotein E1. Processing of the precursor of protein E3/E2 into E2 and E3 results in a heterodimer of the spike glycoproteins E2 and E1. Spike at virion surface are constituted of a trimer of E2-E1 heterodimers. Interacts with 6K protein. Interacts with host LDLRAD3; this interaction mediates viral entry to the host cell. As to quaternary structure, oligomer. Interacts with spike glycoprotein E1. Interacts with spike glycoprotein E2. Post-translationally, structural polyprotein: Specific enzymatic cleavages in vivo yield mature proteins. Capsid protein is auto-cleaved during polyprotein translation, unmasking a signal peptide at the N-terminus of the precursor of E3/E2. The remaining polyprotein is then targeted to the host endoplasmic reticulum, where host signal peptidase cleaves it into pE2, 6K and E1 proteins. pE2 is further processed to mature E3 and E2 by host furin in trans-Golgi vesicle. In terms of processing, palmitoylated via thioester bonds. These palmitoylations may induce disruption of the C-terminus transmembrane. This would result in the reorientation of E2 C-terminus from lumenal to cytoplasmic side. Phosphorylated on serine and threonine residues. Post-translationally, N-glycosylated. In terms of processing, palmitoylated via thioester bonds.

Its subcellular location is the virion. It is found in the host cytoplasm. The protein localises to the host cell membrane. The protein resides in the host nucleus. It localises to the virion membrane. It catalyses the reaction Autocatalytic release of the core protein from the N-terminus of the togavirus structural polyprotein by hydrolysis of a -Trp-|-Ser- bond.. Its function is as follows. Forms an icosahedral capsid with a T=4 symmetry composed of 240 copies of the capsid protein surrounded by a lipid membrane through which penetrate 80 spikes composed of trimers of E1-E2 heterodimers. The capsid protein binds to the viral RNA genome at a site adjacent to a ribosome binding site for viral genome translation following genome release. Possesses a protease activity that results in its autocatalytic cleavage from the nascent structural protein. Following its self-cleavage, the capsid protein transiently associates with ribosomes, and within several minutes the protein binds to viral RNA and rapidly assembles into icosahedric core particles. The resulting nucleocapsid eventually associates with the cytoplasmic domain of the spike glycoprotein E2 at the cell membrane, leading to budding and formation of mature virions. In case of infection, new virions attach to target cells and after clathrin-mediated endocytosis their membrane fuses with the host endosomal membrane. This leads to the release of the nucleocapsid into the cytoplasm, followed by an uncoating event necessary for the genomic RNA to become accessible. The uncoating might be triggered by the interaction of capsid proteins with ribosomes. Binding of ribosomes would release the genomic RNA since the same region is genomic RNA-binding and ribosome-binding. Specifically inhibits interleukin-1 receptor-associated kinase 1/IRAK1-dependent signaling during viral entry, representing a means by which the alphaviruses may evade innate immune detection and activation prior to viral gene expression. Inhibits host transcription. Forms a tetrameric complex with XPO1/CRM1 and the nuclear import receptor importin. This complex blocks the central channel of host nuclear pores thereby inhibiting the receptor-mediated nuclear transport and thus the host mRNA and rRNA transcription. The inhibition of transcription is linked to a cytopathic effect on the host cell. Provides the signal sequence for the translocation of the precursor of protein E3/E2 to the host endoplasmic reticulum. Furin-cleaved E3 remains associated with spike glycoprotein E1 and mediates pH protection of the latter during the transport via the secretory pathway. After virion release from the host cell, the assembly protein E3 is gradually released in the extracellular space. In terms of biological role, plays a role in viral attachment to target host cell, by binding to the cell receptor LDLRAD3. Synthesized as a p62 precursor which is processed by furin at the cell membrane just before virion budding, giving rise to E2-E1 heterodimer. The p62-E1 heterodimer is stable, whereas E2-E1 is unstable and dissociate at low pH. p62 is processed at the last step, presumably to avoid E1 fusion activation before its final export to cell surface. E2 C-terminus contains a transitory transmembrane that would be disrupted by palmitoylation, resulting in reorientation of the C-terminal tail from lumenal to cytoplasmic side. This step is critical since E2 C-terminus is involved in budding by interacting with capsid proteins. This release of E2 C-terminus in cytoplasm occurs lately in protein export, and precludes premature assembly of particles at the endoplasmic reticulum membrane. Functionally, acts as a viroporin that participates in virus glycoprotein processing and transport to the plasma membrane, cell permeabilization and budding of viral particles. Disrupts the calcium homeostasis of the cell, probably at the endoplasmic reticulum level. This leads to cytoplasmic calcium elevation. Because of its lipophilic properties, the 6K protein is postulated to influence the selection of lipids that interact with the transmembrane domains of the glycoproteins, which, in turn, affects the deformability of the bilayer required for the extreme curvature that occurs as budding proceeds. Present in low amount in virions, about 3% compared to viral glycoproteins. Its function is as follows. Class II viral fusion protein. Fusion activity is inactive as long as E1 is bound to E2 in mature virion. After virus attachment to cell receptor LDLRAD3 and endocytosis, acidification of the endosome would induce dissociation of E1/E2 heterodimer and concomitant trimerization of the E1 subunits. This E1 trimer is fusion active, and promotes release of viral nucleocapsid in cytoplasm after endosome and viral membrane fusion. Efficient fusion requires the presence of cholesterol and sphingolipid in the target membrane. Fusion is optimal at levels of about 1 molecule of cholesterol per 2 molecules of phospholipids, and is specific for sterols containing a 3-beta-hydroxyl group. The protein is Structural polyprotein of Bos taurus (Bovine).